Consider the following 500-residue polypeptide: Glycerol kinase (500 aa).

Residue threonine 13 participates in ADP binding. Positions 13, 14, and 15 each coordinate ATP. Threonine 13 lines the sn-glycerol 3-phosphate pocket. Residue arginine 17 participates in ADP binding. 4 residues coordinate sn-glycerol 3-phosphate: arginine 83, glutamate 84, tyrosine 135, and aspartate 244. Arginine 83, glutamate 84, tyrosine 135, aspartate 244, and glutamine 245 together coordinate glycerol. ADP-binding residues include threonine 266 and glycine 309. Positions 266, 309, 313, and 410 each coordinate ATP. 2 residues coordinate ADP: glycine 410 and asparagine 414.

This sequence belongs to the FGGY kinase family.

The enzyme catalyses glycerol + ATP = sn-glycerol 3-phosphate + ADP + H(+). It functions in the pathway polyol metabolism; glycerol degradation via glycerol kinase pathway; sn-glycerol 3-phosphate from glycerol: step 1/1. With respect to regulation, inhibited by fructose 1,6-bisphosphate (FBP). Functionally, key enzyme in the regulation of glycerol uptake and metabolism. Catalyzes the phosphorylation of glycerol to yield sn-glycerol 3-phosphate. The polypeptide is Glycerol kinase (Burkholderia ambifaria (strain ATCC BAA-244 / DSM 16087 / CCUG 44356 / LMG 19182 / AMMD) (Burkholderia cepacia (strain AMMD))).